A 606-amino-acid chain; its full sequence is Neutral/alkaline invertase 3, chloroplastic (606 aa).

The N-terminal 58 residues, 1–58, are a transit peptide targeting the chloroplast; sequence MGIAEVALHSMPGAFAAHSPASNLPLAADAARGRRRRSANSLHSSRALQGPVRFPGLR. The interval 97 to 126 is disordered; the sequence is RVPGQAVGGNGSVNGSAAKPPPQRRKASSV.

It belongs to the glycosyl hydrolase 100 family.

It localises to the plastid. It is found in the chloroplast. It catalyses the reaction Hydrolysis of terminal non-reducing beta-D-fructofuranoside residues in beta-D-fructofuranosides.. Its function is as follows. Mitochondrial invertase that cleaves sucrose into glucose and fructose. This chain is Neutral/alkaline invertase 3, chloroplastic, found in Oryza sativa subsp. japonica (Rice).